The chain runs to 98 residues: NADH-quinone oxidoreductase subunit K (98 aa).

The next 3 membrane-spanning stretches (helical) occupy residues 1–21 (MGHLLGLGAVLFCISLAGIFL), 27–47 (IVLLMSIELMLLSVNVNFIAF), and 59–79 (FVFFILTVAAAEAAIGLAILV).

The protein belongs to the complex I subunit 4L family. As to quaternary structure, NDH-1 is composed of 14 different subunits. Subunits NuoA, H, J, K, L, M, N constitute the membrane sector of the complex.

The protein localises to the cell inner membrane. It carries out the reaction a quinone + NADH + 5 H(+)(in) = a quinol + NAD(+) + 4 H(+)(out). In terms of biological role, NDH-1 shuttles electrons from NADH, via FMN and iron-sulfur (Fe-S) centers, to quinones in the respiratory chain. The immediate electron acceptor for the enzyme in this species is believed to be ubiquinone. Couples the redox reaction to proton translocation (for every two electrons transferred, four hydrogen ions are translocated across the cytoplasmic membrane), and thus conserves the redox energy in a proton gradient. The chain is NADH-quinone oxidoreductase subunit K from Xanthomonas oryzae pv. oryzae (strain PXO99A).